The chain runs to 316 residues: Ribosomal protein L11 methyltransferase (316 aa).

S-adenosyl-L-methionine is bound by residues threonine 159, glycine 179, aspartate 201, and asparagine 243.

The protein belongs to the methyltransferase superfamily. PrmA family.

Its subcellular location is the cytoplasm. The catalysed reaction is L-lysyl-[protein] + 3 S-adenosyl-L-methionine = N(6),N(6),N(6)-trimethyl-L-lysyl-[protein] + 3 S-adenosyl-L-homocysteine + 3 H(+). Methylates ribosomal protein L11. The chain is Ribosomal protein L11 methyltransferase from Gloeobacter violaceus (strain ATCC 29082 / PCC 7421).